A 343-amino-acid polypeptide reads, in one-letter code: Anthranilate phosphoribosyltransferase (343 aa).

5-phospho-alpha-D-ribose 1-diphosphate-binding positions include glycine 84, 87–88 (GD), threonine 92, 94–97 (NIST), 112–120 (KHGNRGVSS), and serine 124. An anthranilate-binding site is contributed by glycine 84. Serine 96 contributes to the Mg(2+) binding site. Residue asparagine 115 participates in anthranilate binding. Arginine 170 is a binding site for anthranilate. Mg(2+)-binding residues include aspartate 229 and glutamate 230.

The protein belongs to the anthranilate phosphoribosyltransferase family. Homodimer. Mg(2+) serves as cofactor.

It carries out the reaction N-(5-phospho-beta-D-ribosyl)anthranilate + diphosphate = 5-phospho-alpha-D-ribose 1-diphosphate + anthranilate. The protein operates within amino-acid biosynthesis; L-tryptophan biosynthesis; L-tryptophan from chorismate: step 2/5. Functionally, catalyzes the transfer of the phosphoribosyl group of 5-phosphorylribose-1-pyrophosphate (PRPP) to anthranilate to yield N-(5'-phosphoribosyl)-anthranilate (PRA). This chain is Anthranilate phosphoribosyltransferase, found in Burkholderia thailandensis (strain ATCC 700388 / DSM 13276 / CCUG 48851 / CIP 106301 / E264).